Here is a 130-residue protein sequence, read N- to C-terminus: Small ribosomal subunit protein uS11 (130 aa).

Belongs to the universal ribosomal protein uS11 family. Part of the 30S ribosomal subunit. Interacts with proteins S7 and S18. Binds to IF-3.

Located on the platform of the 30S subunit, it bridges several disparate RNA helices of the 16S rRNA. Forms part of the Shine-Dalgarno cleft in the 70S ribosome. This is Small ribosomal subunit protein uS11 from Syntrophobacter fumaroxidans (strain DSM 10017 / MPOB).